Reading from the N-terminus, the 211-residue chain is MASCVVRDWQGKEAGKATLDLKVAKEASAVDLMHRAVLRQQAHMRQGTASTLTRSEVRGGGRKPYKQKGTGRARQGSVRTPLRPGGGIIFGPKPRSYNLAMNRKERRSALRTALMARIDDITVVKDFGTSLEAPKTREITEALGRLGIAADTKVLIVLTNPSEMVRRSVRNLDKVKLISANHLNVFDLLHANSLVVGEDALTTIQEVYGDD.

The interval 42-87 (AHMRQGTASTLTRSEVRGGGRKPYKQKGTGRARQGSVRTPLRPGGG) is disordered. Over residues 60–71 (GGRKPYKQKGTG) the composition is skewed to basic residues.

The protein belongs to the universal ribosomal protein uL4 family. In terms of assembly, part of the 50S ribosomal subunit.

One of the primary rRNA binding proteins, this protein initially binds near the 5'-end of the 23S rRNA. It is important during the early stages of 50S assembly. It makes multiple contacts with different domains of the 23S rRNA in the assembled 50S subunit and ribosome. In terms of biological role, forms part of the polypeptide exit tunnel. The sequence is that of Large ribosomal subunit protein uL4 from Synechococcus sp. (strain CC9902).